A 225-amino-acid chain; its full sequence is Potassium-transporting ATPase KdpC subunit (225 aa).

Residues 18 to 38 traverse the membrane as a helical segment; the sequence is ALLVLTVVTGIVYPLVVTGVA. The tract at residues 134 to 161 is disordered; the sequence is NSVPGHPVRPEDVPADAVTSSGSGLDPD.

Belongs to the KdpC family. In terms of assembly, the system is composed of three essential subunits: KdpA, KdpB and KdpC.

Its subcellular location is the cell membrane. In terms of biological role, part of the high-affinity ATP-driven potassium transport (or Kdp) system, which catalyzes the hydrolysis of ATP coupled with the electrogenic transport of potassium into the cytoplasm. This subunit acts as a catalytic chaperone that increases the ATP-binding affinity of the ATP-hydrolyzing subunit KdpB by the formation of a transient KdpB/KdpC/ATP ternary complex. This is Potassium-transporting ATPase KdpC subunit from Streptomyces coelicolor (strain ATCC BAA-471 / A3(2) / M145).